The following is a 1216-amino-acid chain: MAAHSSLYNEDRNLLRIREKERRNQEAHQEKEAFPEKAPLFPEPYKTAKGDELSSRIQTMLGDYEEMKEFLSSKSHPHRLDGSEDRPGKPRYPLGHDRGNGAASSSLRTHVYHQPIHTSAPGSRPVGNISHSPKMAQPRMEPSLHTKIYDGPRLTQDHLSQGHCSRKCDRRAEGDSAPERKLSPLISSLPSPVPPLSPVHSRLQGTSKAHSSGVSSKSCCVAKSSKDLVAKAQDKETPHDGLVAVTSLGSAPPQPPCQTFPPPPLPSKSAAMQQKPTAYVRPMDGQDQAPSESPELKLPLEDYGQQSFEKPDLKVPAKAKLTRLRMPSQSVEQPYSNEVHCVEEILKEMTHSWPPPLTAIHTPSTAEPSRFPFPTKDPLHVSPATQSQKQYDTPSKTHPNPQQGTSMLEDDLQLSDSEDSDTEQATEKPPSPPAPPSAPQTLPEPVASAHSSSGESESSESDSSSDSESESSSSDSEEEEENEPLETRAPEPEPPTTNKWQLDNWLTKVNQPSVPLDGRGSTESPQWRQESKGVAEGSSDQQHPDSKDPLPKSSSKTLRGPSEGPSLGRGAVRNPPLNRNPHLGKPWAANNPGNPPRLRPGRAQASSQAESEVGPLPYGSKEQTSKDRPKVKTKGRPRAVGSREPKPEVPAPTPQAAVPRPKPPVPTPSEKRKHKSSTAPSKAPSAPQPPKDSAGDRNPEHSALVSLTQSQGPSHSSRGSSGSVRTSGCRQAVIAQGDGCKDKLLLPLRDTKLLSPLRDSPPPTSLVVKITLDLLTRIPQPLGKGSRPRKAEDKQLSAGKKQDSETKSCDSSSRVTKKRKVTQKKSTVTRDTNWISRRASSSSSHTESSRTKAPRSSSENSRKEMLPPASASSVSSSSSSQKPSRPAQKRPRPDEDTCSQEPPRSASSTKSSSTDPPAPKHRKVQARGSEHKGSSGDAANAANPFPVPSLPNGNAKPGKPQVKSDRQQADFHMKEAKKLKCKAETMVDKAGKAFKYLEAVLSFIECGMASESESSAKSAYAVYSETIDLIRYVMSLKCFSDNTMPAQEKIFAVLCLRCQSLLNMAMFRCKKDTVMKYSRTLSEHFKSTSKVAQAPSPCTARSTGVPSPLSPMPSPASSVGSQSSAGSSMGSVGVTATVSTPVSIQNMTSSYVTITSHVLTAFSLWEQAEALTRKNKEFFAQLSTKVRVLALNSSLVDLVHYTRQGLQRLKQSPKGP.

Disordered regions lie at residues 1–52 (MAAH…KGDE), 68–104 (KEFL…GAAS), 116–139 (IHTS…AQPR), 152–217 (PRLT…VSSK), 244–275 (AVTS…MQQK), and 352–728 (SWPP…RTSG). 2 stretches are compositionally biased toward basic and acidic residues: residues 9–35 (NEDR…EAFP) and 78–99 (HRLD…HDRG). Over residues 166–182 (RKCDRRAEGDSAPERKL) the composition is skewed to basic and acidic residues. Phosphoserine occurs at positions 183, 191, and 197. A compositionally biased stretch (low complexity) spans 207 to 217 (SKAHSSGVSSK). A compositionally biased stretch (pro residues) spans 252–266 (PPQPPCQTFPPPPLP). Residues 383-406 (PATQSQKQYDTPSKTHPNPQQGTS) are compositionally biased toward polar residues. Residues 408–424 (LEDDLQLSDSEDSDTEQ) are compositionally biased toward acidic residues. Positions 429 to 438 (PPSPPAPPSA) are enriched in pro residues. A compositionally biased stretch (acidic residues) spans 457-484 (ESSESDSSSDSESESSSSDSEEEEENEP). At lysine 682 the chain carries N6-acetyllysine. Residues 710–728 (SQGPSHSSRGSSGSVRTSG) are compositionally biased toward low complexity. A phosphoserine mark is found at serine 755 and serine 760. Disordered stretches follow at residues 777 to 969 (RIPQ…RQQA) and 1094 to 1125 (APSP…QSSA). Over residues 789–808 (RKAEDKQLSAGKKQDSETKS) the composition is skewed to basic and acidic residues. Low complexity-rich tracts occupy residues 824–846 (KKST…SSHT), 867–886 (PPAS…PSRP), 902–915 (PPRS…SSTD), and 1115–1125 (PASSVGSQSSA).

It belongs to the AF4 family. Component of the super elongation complex (SEC), at least composed of EAF1, EAF2, CDK9, MLLT3/AF9, AFF (AFF1 or AFF4), the P-TEFb complex and ELL (ELL, ELL2 or ELL3).

The protein localises to the nucleus. The polypeptide is AF4/FMR2 family member 1 (Aff1) (Mus musculus (Mouse)).